Here is a 324-residue protein sequence, read N- to C-terminus: COP9 signalosome complex subunit 6 (324 aa).

One can recognise an MPN domain in the interval 38–171 (VALHPLVILN…VSVFESVIDI (134 aa)).

This sequence belongs to the peptidase M67A family. CSN6 subfamily. As to quaternary structure, component of the CSN complex, composed of COPS1/GPS1, COPS2, COPS3, COPS4, COPS5, COPS6, COPS7 (COPS7A or COPS7B), COPS8 and COPS9. In the complex, it probably interacts directly with COPS2, COPS4, COPS5, COPS7 (COPS7A or COPS7B) and COPS9. Interacts with the translation initiation factor EIF3S6. Interacts weakly with RBX1. Directly interacts with COP1 and 14-3-3 protein sigma/SFN. Interacts with ERCC6.

The protein resides in the cytoplasm. It is found in the nucleus. Component of the COP9 signalosome complex (CSN), a complex involved in various cellular and developmental processes. The CSN complex is an essential regulator of the ubiquitin (Ubl) conjugation pathway by mediating the deneddylation of the cullin subunits of SCF-type E3 ligase complexes, leading to decrease the Ubl ligase activity of SCF-type complexes such as SCF, CSA or DDB2. The complex is also involved in phosphorylation of p53/TP53, c-jun/JUN, IkappaBalpha/NFKBIA, ITPK1 and IRF8, possibly via its association with CK2 and PKD kinases. CSN-dependent phosphorylation of TP53 and JUN promotes and protects degradation by the Ubl system, respectively. Has some glucocorticoid receptor-responsive activity. Stabilizes COP1 through reducing COP1 auto-ubiquitination and decelerating COP1 turnover rate, hence regulates the ubiquitination of COP1 targets, including SFN. The sequence is that of COP9 signalosome complex subunit 6 (COPS6) from Bos taurus (Bovine).